The sequence spans 294 residues: 4-hydroxy-tetrahydrodipicolinate synthase (294 aa).

T45 contacts pyruvate. The Proton donor/acceptor role is filled by Y133. K161 serves as the catalytic Schiff-base intermediate with substrate. I203 contacts pyruvate.

The protein belongs to the DapA family. As to quaternary structure, homotetramer; dimer of dimers.

The protein localises to the cytoplasm. The enzyme catalyses L-aspartate 4-semialdehyde + pyruvate = (2S,4S)-4-hydroxy-2,3,4,5-tetrahydrodipicolinate + H2O + H(+). It functions in the pathway amino-acid biosynthesis; L-lysine biosynthesis via DAP pathway; (S)-tetrahydrodipicolinate from L-aspartate: step 3/4. In terms of biological role, catalyzes the condensation of (S)-aspartate-beta-semialdehyde [(S)-ASA] and pyruvate to 4-hydroxy-tetrahydrodipicolinate (HTPA). The sequence is that of 4-hydroxy-tetrahydrodipicolinate synthase from Shewanella sp. (strain W3-18-1).